Consider the following 1112-residue polypeptide: Constitutive coactivator of PPAR-gamma-like protein 1 (1112 aa).

The interaction with YES1, SRC and FYN stretch occupies residues 339–403 (PPHYLARPNP…YSLSEPALTL (65 aa)). Positions 372 to 525 (QAKPAVPQVP…GKGSHMGTVQ (154 aa)) are disordered. 2 stretches are compositionally biased toward polar residues: residues 403-418 (LDTSGKNLTEQNSYSN) and 433-445 (SPINLAQSGSPNH). Positions 479 to 500 (GWEKTGSHAEPLARGDPGDQVK) are enriched in basic and acidic residues. Residues 503 to 512 (GSSTASSGSQ) are compositionally biased toward polar residues. At T653 the chain carries Phosphothreonine. An RNA binding region spans residues 827–1112 (AEQAAKVEKM…LEAAVLNKEE (286 aa)). An omega-N-methylarginine mark is found at R871, R882, and R884. The interval 919 to 943 (AFSGSDSSRTSKSQGGVQPIPSQGG) is disordered. Over residues 922–934 (GSDSSRTSKSQGG) the composition is skewed to polar residues. K930 is modified (N6-acetyllysine). S958 bears the Phosphoserine mark. R980 and R984 each carry omega-N-methylarginine. Phosphoserine is present on residues S1021 and S1042. Residues 1030 to 1090 (KSKSGESKSS…PCNTNPHLNA (61 aa)) are disordered. A compositionally biased stretch (polar residues) spans 1070–1090 (HSESALNNDSKPCNTNPHLNA).

Belongs to the constitutive coactivator of PPAR-gamma family. In terms of assembly, interacts with PURA. Interacts with SRC family protein kinases YES1, SRC and FYN. Upon tyrosine phosphorylation, interacts with PIK3R1. Interacts with IGF2BP1/IMP-1 in an RNA-dependent manner. Arg-980 is dimethylated, probably to asymmetric dimethylarginine. In terms of processing, phosphorylated on tyrosine by src family kinases upon ultraviolet exposure. In terms of tissue distribution, in the brain, predominantly expressed in the hippocampus, caudate putamen, cerebral cortex and cerebellum. Expression is restricted to neurons (at protein level).

The protein resides in the cytoplasm. The protein localises to the cell membrane. In terms of biological role, component of the oxidative stress-induced survival signaling. May regulate the activation of SRC family protein kinases. May act as a scaffolding protein enabling SRC family protein kinases to phosphorylate and activate PI3-kinase. Binds IGF2 RNA and promotes the production of IGF2 protein. The protein is Constitutive coactivator of PPAR-gamma-like protein 1 (FAM120A) of Mus musculus (Mouse).